Reading from the N-terminus, the 445-residue chain is Tubulin beta-3 chain (445 aa).

GTP-binding residues include Gln-11, Glu-69, Ser-138, Gly-142, Thr-143, Gly-144, Asn-204, and Asn-226. Mg(2+) is bound at residue Glu-69. Positions 417-426 (DLVSEYQQYQ) are enriched in polar residues. Residues 417–445 (DLVSEYQQYQEASADDEADEFDEEEGDEE) form a disordered region. Over residues 429–445 (SADDEADEFDEEEGDEE) the composition is skewed to acidic residues.

The protein belongs to the tubulin family. Dimer of alpha and beta chains. A typical microtubule is a hollow water-filled tube with an outer diameter of 25 nm and an inner diameter of 15 nM. Alpha-beta heterodimers associate head-to-tail to form protofilaments running lengthwise along the microtubule wall with the beta-tubulin subunit facing the microtubule plus end conferring a structural polarity. Microtubules usually have 13 protofilaments but different protofilament numbers can be found in some organisms and specialized cells. The cofactor is Mg(2+).

The protein resides in the cytoplasm. The protein localises to the cytoskeleton. Functionally, tubulin is the major constituent of microtubules, a cylinder consisting of laterally associated linear protofilaments composed of alpha- and beta-tubulin heterodimers. Microtubules grow by the addition of GTP-tubulin dimers to the microtubule end, where a stabilizing cap forms. Below the cap, tubulin dimers are in GDP-bound state, owing to GTPase activity of alpha-tubulin. The polypeptide is Tubulin beta-3 chain (TUBB3) (Oomycete-like sp. (strain MacKay2000)).